Reading from the N-terminus, the 241-residue chain is 3-deoxy-manno-octulosonate cytidylyltransferase (241 aa).

Belongs to the KdsB family.

Its subcellular location is the cytoplasm. It carries out the reaction 3-deoxy-alpha-D-manno-oct-2-ulosonate + CTP = CMP-3-deoxy-beta-D-manno-octulosonate + diphosphate. Its pathway is nucleotide-sugar biosynthesis; CMP-3-deoxy-D-manno-octulosonate biosynthesis; CMP-3-deoxy-D-manno-octulosonate from 3-deoxy-D-manno-octulosonate and CTP: step 1/1. It participates in bacterial outer membrane biogenesis; lipopolysaccharide biosynthesis. Activates KDO (a required 8-carbon sugar) for incorporation into bacterial lipopolysaccharide in Gram-negative bacteria. The chain is 3-deoxy-manno-octulosonate cytidylyltransferase from Rickettsia rickettsii (strain Sheila Smith).